Consider the following 478-residue polypeptide: Glycogen synthase (478 aa).

Lys-16 contributes to the ADP-alpha-D-glucose binding site.

It belongs to the glycosyltransferase 1 family. Bacterial/plant glycogen synthase subfamily.

The enzyme catalyses [(1-&gt;4)-alpha-D-glucosyl](n) + ADP-alpha-D-glucose = [(1-&gt;4)-alpha-D-glucosyl](n+1) + ADP + H(+). It functions in the pathway glycan biosynthesis; glycogen biosynthesis. In terms of biological role, synthesizes alpha-1,4-glucan chains using ADP-glucose. The chain is Glycogen synthase from Lachnospira eligens (strain ATCC 27750 / DSM 3376 / VPI C15-48 / C15-B4) (Eubacterium eligens).